A 433-amino-acid chain; its full sequence is Coiled-coil domain-containing protein 71 (433 aa).

Serine 125 carries the post-translational modification Phosphoserine. Disordered stretches follow at residues leucine 204–alanine 256, glutamine 284–valine 310, and lysine 325–glutamine 396. Basic residues-rich tracts occupy residues lysine 216–threonine 230 and valine 288–alanine 306. The stretch at lysine 260–lysine 330 forms a coiled coil.

The sequence is that of Coiled-coil domain-containing protein 71 (Ccdc71) from Mus musculus (Mouse).